Reading from the N-terminus, the 325-residue chain is Glutarate 2-hydroxylase (325 aa).

Fe cation-binding residues include His-160, Asp-162, and His-292.

This sequence belongs to the glutarate hydroxylase family. As to quaternary structure, homotetramer. Fe(2+) is required as a cofactor.

The catalysed reaction is glutarate + 2-oxoglutarate + O2 = (S)-2-hydroxyglutarate + succinate + CO2. It functions in the pathway amino-acid degradation. In terms of biological role, acts as an alpha-ketoglutarate-dependent dioxygenase catalyzing hydroxylation of glutarate (GA) to L-2-hydroxyglutarate (L2HG). Functions in a L-lysine degradation pathway that proceeds via cadaverine, glutarate and L-2-hydroxyglutarate. This is Glutarate 2-hydroxylase from Escherichia coli O6:H1 (strain CFT073 / ATCC 700928 / UPEC).